The following is a 264-amino-acid chain: ATP synthase subunit a (264 aa).

Helical transmembrane passes span 29–49 (TWHI…LWIF), 90–110 (IAPL…MDMI), 134–154 (DVNI…FYSI), 177–197 (IPVN…SLAL), 208–228 (LIFI…TLGV), and 235–255 (LIFH…LTIV).

It belongs to the ATPase A chain family. F-type ATPases have 2 components, CF(1) - the catalytic core - and CF(0) - the membrane proton channel. CF(1) has five subunits: alpha(3), beta(3), gamma(1), delta(1), epsilon(1). CF(0) has three main subunits: a(1), b(2) and c(9-12). The alpha and beta chains form an alternating ring which encloses part of the gamma chain. CF(1) is attached to CF(0) by a central stalk formed by the gamma and epsilon chains, while a peripheral stalk is formed by the delta and b chains.

It localises to the cell inner membrane. Functionally, key component of the proton channel; it plays a direct role in the translocation of protons across the membrane. This is ATP synthase subunit a from Shewanella baltica (strain OS223).